Here is a 110-residue protein sequence, read N- to C-terminus: Small ribosomal subunit protein bS18 (110 aa).

Low complexity predominate over residues methionine 1–glycine 18. The interval methionine 1 to arginine 41 is disordered. Positions proline 32–arginine 41 are enriched in basic residues.

This sequence belongs to the bacterial ribosomal protein bS18 family. In terms of assembly, part of the 30S ribosomal subunit. Forms a tight heterodimer with protein bS6.

Binds as a heterodimer with protein bS6 to the central domain of the 16S rRNA, where it helps stabilize the platform of the 30S subunit. The polypeptide is Small ribosomal subunit protein bS18 (Trichlorobacter lovleyi (strain ATCC BAA-1151 / DSM 17278 / SZ) (Geobacter lovleyi)).